We begin with the raw amino-acid sequence, 380 residues long: Large ribosomal subunit protein mL38 (380 aa).

The transit peptide at 1 to 26 (MAAPWWRAAFSVTGRCRGISTSASLS) directs the protein to the mitochondrion. The stretch at 98-123 (SRTQKLQERKRFLQELRANSEEERAA) forms a coiled coil.

It belongs to the phosphatidylethanolamine-binding protein family. Mitochondrion-specific ribosomal protein mL38 subfamily. In terms of assembly, component of the mitochondrial ribosome large subunit (39S) which comprises a 16S rRNA and about 50 distinct proteins.

Its subcellular location is the mitochondrion. The polypeptide is Large ribosomal subunit protein mL38 (Mrpl38) (Rattus norvegicus (Rat)).